The primary structure comprises 99 residues: C-C motif chemokine 17 (99 aa).

A signal peptide spans 1 to 23; that stretch reads MIPLKMLLLVTLLLGASLQVTHA. 2 disulfides stabilise this stretch: C33–C57 and C34–C73.

The protein belongs to the intercrine beta (chemokine CC) family. As to expression, expressed in thymus, spleen, lymph node, lung and heart.

The protein resides in the secreted. Functionally, chemokine, which displays chemotactic activity for T lymphocytes, preferentially Th2 cells, but not monocytes or granulocytes. Therefore plays an important role in a wide range of inflammatory and immunological processes. Acts by binding to CCR4 at T-cell surface. Mediates GM-CSF/CSF2-driven pain and inflammation. In the brain, required to maintain the typical, highly branched morphology of hippocampal microglia under homeostatic conditions. May be important for the appropriate adaptation of microglial morphology and synaptic plasticity to acute lipopolysaccharide (LPS)-induced neuroinflammation. Plays a role in wound healing, mainly by inducing fibroblast migration into the wound. This Canis lupus familiaris (Dog) protein is C-C motif chemokine 17 (CCL17).